Consider the following 337-residue polypeptide: Heat-inducible transcription repressor HrcA (337 aa).

This sequence belongs to the HrcA family.

Its function is as follows. Negative regulator of class I heat shock genes (grpE-dnaK-dnaJ and groELS operons). Prevents heat-shock induction of these operons. This is Heat-inducible transcription repressor HrcA from Kocuria rhizophila (strain ATCC 9341 / DSM 348 / NBRC 103217 / DC2201).